A 101-amino-acid polypeptide reads, in one-letter code: MIHQINSINMEIILTDVARDALQEKIVSQLSILLRVYRDTNTSESVTLPLSGVNLQEVAARSFFNNESIPWFFHLFRPCQSGHEKKPLCPQALELVLSFSS.

Its subcellular location is the mitochondrion. This is an uncharacterized protein from Arabidopsis thaliana (Mouse-ear cress).